The following is a 325-amino-acid chain: Hydroxymethylglutaryl-CoA lyase, mitochondrial (325 aa).

A mitochondrion-targeting transit peptide spans 1–27 (MATVRKAFPQRLVGLASLRAASTSSMG). Residues 33–300 (VKIVEVGPRD…HTGVNLQKLL (268 aa)) form the Pyruvate carboxyltransferase domain. Arginine 41 lines the substrate pocket. Aspartate 42 contacts a divalent metal cation. Position 48 is an N6-acetyllysine; alternate (lysine 48). An N6-succinyllysine; alternate modification is found at lysine 48. An N6-acetyllysine modification is found at lysine 111. N6-acetyllysine; alternate is present on residues lysine 137 and lysine 179. Lysine 137 and lysine 179 each carry N6-succinyllysine; alternate. A divalent metal cation-binding residues include histidine 233 and histidine 235. Cysteine 266 is an active-site residue. Asparagine 275 is a binding site for a divalent metal cation. A Microbody targeting signal motif is present at residues 323–325 (CKL). Lysine 324 is modified (N6-acetyllysine).

The protein belongs to the HMG-CoA lyase family. Homodimer; disulfide-linked. Can also form homotetramers. In suckling rat, highest levels in liver and in intestine. Lower levels in heart, kidney and cerebellum. Weak expression in brain cortex, medulla and midbrain. Levels decrease slightly during weaning.

It localises to the mitochondrion matrix. The protein localises to the peroxisome. It carries out the reaction (3S)-3-hydroxy-3-methylglutaryl-CoA = acetoacetate + acetyl-CoA. The protein operates within metabolic intermediate metabolism; (S)-3-hydroxy-3-methylglutaryl-CoA degradation; acetoacetate from (S)-3-hydroxy-3-methylglutaryl-CoA: step 1/1. Its function is as follows. Mitochondrial 3-hydroxy-3-methylglutaryl-CoA lyase that catalyzes a cation-dependent cleavage of (S)-3-hydroxy-3-methylglutaryl-CoA into acetyl-CoA and acetoacetate, a key step in ketogenesis. Terminal step in leucine catabolism. Ketone bodies (beta-hydroxybutyrate, acetoacetate and acetone) are essential as an alternative source of energy to glucose, as lipid precursors and as regulators of metabolism. The polypeptide is Hydroxymethylglutaryl-CoA lyase, mitochondrial (Hmgcl) (Rattus norvegicus (Rat)).